The following is a 309-amino-acid chain: Porphobilinogen deaminase (309 aa).

At Cys-241 the chain carries S-(dipyrrolylmethanemethyl)cysteine.

Belongs to the HMBS family. As to quaternary structure, monomer. Requires dipyrromethane as cofactor.

It carries out the reaction 4 porphobilinogen + H2O = hydroxymethylbilane + 4 NH4(+). It functions in the pathway porphyrin-containing compound metabolism; protoporphyrin-IX biosynthesis; coproporphyrinogen-III from 5-aminolevulinate: step 2/4. Functionally, tetrapolymerization of the monopyrrole PBG into the hydroxymethylbilane pre-uroporphyrinogen in several discrete steps. The chain is Porphobilinogen deaminase from Bacillus cereus (strain ATCC 10987 / NRS 248).